A 363-amino-acid polypeptide reads, in one-letter code: Trans-2,3-enoyl-CoA reductase-like (363 aa).

Ser37 bears the Phosphoserine mark. 4 consecutive transmembrane segments (helical) span residues 143–163 (WTTVFLAEYTGPLLIYLLFYL), 216–235 (NLLKSCAFYWGFTSWIAYYI), 250–270 (VAISAINFLICEAGNHFINVV), and 311–331 (ISFTIMTQTLPVGIFTLLMSI).

Belongs to the steroid 5-alpha reductase family.

The protein localises to the membrane. It localises to the endoplasmic reticulum. In Bos taurus (Bovine), this protein is Trans-2,3-enoyl-CoA reductase-like (TECRL).